Here is a 343-residue protein sequence, read N- to C-terminus: S-adenosylmethionine:tRNA ribosyltransferase-isomerase (343 aa).

The protein belongs to the QueA family. In terms of assembly, monomer.

The protein resides in the cytoplasm. It catalyses the reaction 7-aminomethyl-7-carbaguanosine(34) in tRNA + S-adenosyl-L-methionine = epoxyqueuosine(34) in tRNA + adenine + L-methionine + 2 H(+). It participates in tRNA modification; tRNA-queuosine biosynthesis. Functionally, transfers and isomerizes the ribose moiety from AdoMet to the 7-aminomethyl group of 7-deazaguanine (preQ1-tRNA) to give epoxyqueuosine (oQ-tRNA). The chain is S-adenosylmethionine:tRNA ribosyltransferase-isomerase from Pelobacter propionicus (strain DSM 2379 / NBRC 103807 / OttBd1).